The sequence spans 136 residues: Histone H3.2 (136 aa).

The segment at 1–43 (MARTKQTARKSTGGKAPRKQLATKAARKSAPATGGVKKPHRFR) is disordered. An N6,N6,N6-trimethyllysine; alternate mark is found at lysine 5 and lysine 10. Lysine 5 and lysine 10 each carry N6,N6-dimethyllysine; alternate. Lysine 5 and lysine 10 each carry N6-methyllysine; alternate. Lysine 10 is modified (N6-acetyllysine; alternate). Position 11 is a phosphoserine (serine 11). A Phosphothreonine modification is found at threonine 12. At lysine 15 the chain carries N6-acetyllysine. Residues lysine 19, lysine 24, and lysine 28 each carry the N6-methyllysine; alternate modification. N6-acetyllysine; alternate occurs at positions 19 and 24. Lysine 28 bears the N6,N6,N6-trimethyllysine; alternate mark. Residue lysine 28 is modified to N6,N6-dimethyllysine; alternate. Residue serine 29 is modified to Phosphoserine. Residue lysine 37 is modified to N6,N6,N6-trimethyllysine; alternate. Lysine 37 is modified (N6,N6-dimethyllysine; alternate). An N6-methyllysine; alternate modification is found at lysine 37.

The protein belongs to the histone H3 family. The nucleosome is a histone octamer containing two molecules each of H2A, H2B, H3 and H4 assembled in one H3-H4 heterotetramer and two H2A-H2B heterodimers. The octamer wraps approximately 147 bp of DNA. In terms of processing, acetylation is generally linked to gene activation. Can be acetylated to form H3K9ac, H3K14ac, H3K18ac and H3K23ac. H3K9ac could compete with H3K9me and prevent gene silencing. H3K9ac is restricted to euchromatin. Post-translationally, methylated to form mainly H3K4me, H3K9me, H3K18me, H3K23me, H3K27me and H3K36me. H3K4me1/2/3, H3K9me3, H3K27me3 and H3K36me1/2/3 are typical marks for euchromatin, whereas heterochromatic chromocenters are enriched in H3K9me1/2 and H3K27me1/2. H2BK143ub1 is probably prerequisite for H3K4me. Can be phosphorylated to form H3S10ph, H3T11ph and H3S28ph.

Its subcellular location is the nucleus. It is found in the chromosome. Functionally, core component of nucleosome. Nucleosomes wrap and compact DNA into chromatin, limiting DNA accessibility to the cellular machineries which require DNA as a template. Histones thereby play a central role in transcription regulation, DNA repair, DNA replication and chromosomal stability. DNA accessibility is regulated via a complex set of post-translational modifications of histones, also called histone code, and nucleosome remodeling. The chain is Histone H3.2 from Brassica napus (Rape).